The sequence spans 192 residues: Small ribosomal subunit protein uS5 (192 aa).

Residues 1 to 21 form a disordered region; the sequence is MAAERERGGRERGGRDRDERD. Positions 24–87 constitute an S5 DRBM domain; that stretch reads FVDKLVHINR…DSAKRNLTRV (64 aa).

Belongs to the universal ribosomal protein uS5 family. As to quaternary structure, part of the 30S ribosomal subunit. Contacts proteins S4 and S8.

With S4 and S12 plays an important role in translational accuracy. Functionally, located at the back of the 30S subunit body where it stabilizes the conformation of the head with respect to the body. This chain is Small ribosomal subunit protein uS5, found in Afipia carboxidovorans (strain ATCC 49405 / DSM 1227 / KCTC 32145 / OM5) (Oligotropha carboxidovorans).